The primary structure comprises 300 residues: Metal tolerance protein 12 (300 aa).

At 1 to 26 (MESPESFSTMFMKPIRHILSEKKSRK) the chain is on the cytoplasmic side. The helical transmembrane segment at 27–47 (IALFLLINTAYMVVEFVAGFM) threads the bilayer. The Vacuolar portion of the chain corresponds to 48–50 (SNS). A helical transmembrane segment spans residues 51–71 (LGLISDACHMLFDCAALAIGL). The Cytoplasmic segment spans residues 72–91 (YASYISRLPANHQYNYGRGR). A helical transmembrane segment spans residues 92-112 (FEVLSGYVNAVFLVLVGALIV). The Vacuolar portion of the chain corresponds to 113–128 (LESIERILDPQEISTN). A helical membrane pass occupies residues 129–149 (SLLVVSVGGLLVNIVGLIFFH). Topologically, residues 150–160 (EEHHHAHGGSG) are cytoplasmic. The chain crosses the membrane as a helical span at residues 161–181 (IFLHVLADTMGSVGVVISTLL). At 182 to 186 (IKYKG) the chain is on the vacuolar side. Residues 187-207 (WLVADPASSIFISILIIASVI) traverse the membrane as a helical segment. Residues 208 to 300 (PLLRNSAEIL…WTLQVESVNS (93 aa)) are Cytoplasmic-facing.

This sequence belongs to the cation diffusion facilitator (CDF) transporter (TC 2.A.4) family. SLC30A subfamily.

Its subcellular location is the vacuole membrane. In terms of biological role, involved in sequestration of excess metal in the cytoplasm into vacuoles to maintain metal homeostasis. In Arabidopsis thaliana (Mouse-ear cress), this protein is Metal tolerance protein 12 (MTP12).